Here is a 663-residue protein sequence, read N- to C-terminus: Zinc finger protein GLI2 (663 aa).

A disordered region spans residues I159–P186. Residues S160–S182 are compositionally biased toward low complexity. C2H2-type zinc fingers lie at residues T234–H259, F267–H294, H300–H324, Y330–H355, and Y361–H386. Disordered stretches follow at residues D374–C440, V452–V481, C544–L578, and S619–L663. The segment covering H386–P402 has biased composition (basic and acidic residues). Residues S456–S473 are compositionally biased toward low complexity. 2 stretches are compositionally biased toward polar residues: residues G563 to L578 and S619 to D647.

It belongs to the GLI C2H2-type zinc-finger protein family.

Its subcellular location is the nucleus. The protein resides in the cytoplasm. The protein localises to the cell projection. It localises to the cilium. Functionally, functions as a transcription regulator in the hedgehog (Hh) pathway. Functions as a transcriptional activator. May also function as transcriptional repressor. Binds to the DNA sequence 5'-GAACCACCCA-3'. Is involved in the smoothened (SHH) signaling pathway. Required for normal skeleton development. This is Zinc finger protein GLI2 from Gallus gallus (Chicken).